A 158-amino-acid chain; its full sequence is MSNVFTHINADGNAHMVDVTEKAITEREARAEAFIEMASTTLEMIMSGSHHKGDVFATARIAGIQAAKKTSDLIPLCHPLMLTKVEVDLEAQPEHNRVRITSLCKLSGKTGVEMEALTAASVAALTIYDMCKAVQKDMVISQVRLLEKRGGKSGHFKV.

Substrate-binding positions include 76–78 (LCH) and 114–115 (ME). Aspartate 129 is an active-site residue.

It belongs to the MoaC family. Homohexamer; trimer of dimers.

The enzyme catalyses (8S)-3',8-cyclo-7,8-dihydroguanosine 5'-triphosphate = cyclic pyranopterin phosphate + diphosphate. It participates in cofactor biosynthesis; molybdopterin biosynthesis. Catalyzes the conversion of (8S)-3',8-cyclo-7,8-dihydroguanosine 5'-triphosphate to cyclic pyranopterin monophosphate (cPMP). This is Cyclic pyranopterin monophosphate synthase from Shewanella baltica (strain OS223).